Here is a 745-residue protein sequence, read N- to C-terminus: AMP deaminase 1 (745 aa).

A Phosphothreonine modification is found at threonine 79. Serine 83 carries the phosphoserine modification. Residue tyrosine 214 is modified to Phosphotyrosine. Histidine 301 and histidine 303 together coordinate Zn(2+). Substrate is bound by residues histidine 303 and 372–377; that span reads KFNDKY. Residue serine 439 is modified to Phosphoserine. Histidine 570 serves as a coordination point for Zn(2+). Residue glutamate 573 coordinates substrate. Catalysis depends on histidine 592, which acts as the Proton acceptor. Aspartate 647 contacts Zn(2+). 648–651 is a binding site for substrate; that stretch reads DPMQ.

The protein belongs to the metallo-dependent hydrolases superfamily. Adenosine and AMP deaminases family. As to quaternary structure, homotetramer. Requires Zn(2+) as cofactor.

The catalysed reaction is AMP + H2O + H(+) = IMP + NH4(+). The protein operates within purine metabolism; IMP biosynthesis via salvage pathway; IMP from AMP: step 1/1. Its function is as follows. AMP deaminase plays a critical role in energy metabolism. The sequence is that of AMP deaminase 1 from Mus musculus (Mouse).